A 493-amino-acid polypeptide reads, in one-letter code: Cysteine--tRNA ligase (493 aa).

Cys-31 lines the Zn(2+) pocket. Residues 33 to 43 (PTVYGDAHLGH) carry the 'HIGH' region motif. The Zn(2+) site is built by Cys-226, His-251, and Glu-255. A 'KMSKS' region motif is present at residues 283–287 (KMGKS). An ATP-binding site is contributed by Lys-286.

It belongs to the class-I aminoacyl-tRNA synthetase family. As to quaternary structure, monomer. The cofactor is Zn(2+).

The protein localises to the cytoplasm. The catalysed reaction is tRNA(Cys) + L-cysteine + ATP = L-cysteinyl-tRNA(Cys) + AMP + diphosphate. The chain is Cysteine--tRNA ligase from Phocaeicola vulgatus (strain ATCC 8482 / DSM 1447 / JCM 5826 / CCUG 4940 / NBRC 14291 / NCTC 11154) (Bacteroides vulgatus).